A 159-amino-acid chain; its full sequence is Nucleotide-binding protein PSPA7_4966 (159 aa).

The protein belongs to the YajQ family.

Its function is as follows. Nucleotide-binding protein. The sequence is that of Nucleotide-binding protein PSPA7_4966 from Pseudomonas paraeruginosa (strain DSM 24068 / PA7) (Pseudomonas aeruginosa (strain PA7)).